A 433-amino-acid polypeptide reads, in one-letter code: MAAPTGNGPVIPILGFLTCVAFIYLSFGDLWFGLKTEGELAFVKRNGTQFVVDGKALYVNGWNSYWFMDHAVNDHSRHRVSAMLEAGAKMGLTVCRTWAFNDGGYNALQISPGRFDERVFKALDHVIAEAKTHGVRLLLSLVNNLQAYGGKTQYVNWAWQEGVGLSSSNDSFFFDPSIRRYFKNYLTVLLTRKNSLTGIEYRNDPTIFAWELINEPRCMSDVSGDTLQDWINEMTAFIKSIDNKHLLTVGLEGFYGPSSPKKLTVNPERWASELGSDFVRNSDSPNIDFASVHIYPDHWFHDQGFEEKLKFVVKWMLSHIEDGDKELKKPVLFTEFGLSNLNKDYDPSQRDRFYRTIFDVIYKSAKRKRSGAGTLVWQFLIEGMEGFNDDFGIVPWEQDSIQRLMIEQSCRLSRITGRHLLDKKSIEMCSHRP.

The N-terminal stretch at 1–28 is a signal peptide; the sequence is MAAPTGNGPVIPILGFLTCVAFIYLSFG. N46 carries N-linked (GlcNAc...) asparagine glycosylation. Position 98 (W98) interacts with substrate. An N-linked (GlcNAc...) asparagine glycan is attached at N169. N214 is a binding site for substrate. E215 acts as the Proton donor in catalysis. Residue Y295 participates in substrate binding. Catalysis depends on E335, which acts as the Nucleophile. W377 contacts substrate.

Belongs to the glycosyl hydrolase 5 (cellulase A) family. In terms of tissue distribution, expressed in roots, stems, leaves and seeds.

The protein localises to the secreted. The catalysed reaction is Random hydrolysis of (1-&gt;4)-beta-D-mannosidic linkages in mannans, galactomannans and glucomannans.. This Arabidopsis thaliana (Mouse-ear cress) protein is Mannan endo-1,4-beta-mannosidase 2 (MAN2).